The primary structure comprises 238 residues: MNSNANNTPIAIGISQVFPCSYLDGQQEQLLVIQEETLDPILFERLLAIGFRRSGSAIYKPRCPRCSACQPIRVPIQEFVPSKRQKRTLAHNRDLTWRITTEHTETQYALYEKYIRERHFDGPMYPPSKAQYEQFLFCHWLPPTFIEVYDDNRLVAVAVTDTLPNSFSAIYSYFDPDEERRSLGVLLILLQCRLAKLQGKAFLYLGYQIDANRKMSYKRLYRPYQILTHQGWEYSQVC.

The protein belongs to the R-transferase family. Bpt subfamily.

It is found in the cytoplasm. It catalyses the reaction N-terminal L-glutamyl-[protein] + L-leucyl-tRNA(Leu) = N-terminal L-leucyl-L-glutamyl-[protein] + tRNA(Leu) + H(+). It carries out the reaction N-terminal L-aspartyl-[protein] + L-leucyl-tRNA(Leu) = N-terminal L-leucyl-L-aspartyl-[protein] + tRNA(Leu) + H(+). Functionally, functions in the N-end rule pathway of protein degradation where it conjugates Leu from its aminoacyl-tRNA to the N-termini of proteins containing an N-terminal aspartate or glutamate. The chain is Aspartate/glutamate leucyltransferase from Shewanella oneidensis (strain ATCC 700550 / JCM 31522 / CIP 106686 / LMG 19005 / NCIMB 14063 / MR-1).